The sequence spans 50 residues: Protein PndA (50 aa).

A helical membrane pass occupies residues 5–25; the sequence is TFLMMLIVVCVTILCFVWMVR.

Belongs to the Hok/Gef family.

Its subcellular location is the cell inner membrane. In terms of biological role, when overexpressed kill the cells from the inside by interfering with a vital function in the cell membrane. Toxic component of a type I toxin-antitoxin (TA) system. When expressed is involved in cellular Mg(2+) release and degradation of stable RNA. The sequence is that of Protein PndA (pndA) from Escherichia coli.